We begin with the raw amino-acid sequence, 260 residues long: Acidic leucine-rich nuclear phosphoprotein 32 family member E (260 aa).

Residue M1 is modified to N-acetylmethionine. LRR repeat units lie at residues 18–38 (EVTE…EGLN), 43–64 (ELEF…PSLN), 65–87 (KLRK…AEKC), and 89–110 (NLTY…EALQ). Residue K68 forms a Glycyl lysine isopeptide (Lys-Gly) (interchain with G-Cter in SUMO2) linkage. Residues 123–161 (CEITNLEDYRESIFELLQQITYLDGFDQEDNEAPDSEEE) enclose the LRRCT domain. 2 stretches are compositionally biased toward acidic residues: residues 149–208 (DQED…EEEV) and 218–240 (IQDE…EEEE). Positions 149–260 (DQEDNEAPDS…AEDDGEEDDD (112 aa)) are disordered. Residues 207 to 260 (EVGLSYLMKDEIQDEEDDDDYVDEGEEEEEEEEEGLRGEKRKRDAEDDGEEDDD) form a ZID domain region. Over residues 241 to 251 (GLRGEKRKRDA) the composition is skewed to basic and acidic residues.

The protein belongs to the ANP32 family. Component of a SWR1-like complex, composed of EP400, KAT5/TIP60, TRRAP, BRD8, RUVBL1, RUVBL2, ING3 and ANP32E; the complex does not contain SRCAP. Interacts with H2A.Z/H2AZ1. Interacts with the importin alpha KPNA1 and KPNA2. In terms of processing, phosphorylated. The phosphorylation is nuclear localization signal (NLS)-dependent. Expressed at highest levels in cerebellum and spleen. In the cerebellum, expressed mainly in granule cells and, to a lesser extent, in Purkinje cells.

It is found in the cytoplasm. The protein resides in the nucleus. In terms of biological role, histone chaperone that specifically mediates the genome-wide removal of histone H2A.Z/H2AZ1 from the nucleosome: removes H2A.Z/H2AZ1 from its normal sites of deposition, especially from enhancer and insulator regions. Not involved in deposition of H2A.Z/H2AZ1 in the nucleosome. May stabilize the evicted H2A.Z/H2AZ1-H2B dimer, thus shifting the equilibrium towards dissociation and the off-chromatin state. Inhibits activity of protein phosphatase 2A (PP2A). Does not inhibit protein phosphatase 1. May play a role in cerebellar development and synaptogenesis. The chain is Acidic leucine-rich nuclear phosphoprotein 32 family member E (Anp32e) from Mus musculus (Mouse).